The following is a 250-amino-acid chain: 5-oxoprolinase subunit A (250 aa).

Belongs to the LamB/PxpA family. Forms a complex composed of PxpA, PxpB and PxpC.

It catalyses the reaction 5-oxo-L-proline + ATP + 2 H2O = L-glutamate + ADP + phosphate + H(+). In terms of biological role, catalyzes the cleavage of 5-oxoproline to form L-glutamate coupled to the hydrolysis of ATP to ADP and inorganic phosphate. In Staphylococcus aureus (strain MRSA252), this protein is 5-oxoprolinase subunit A.